A 167-amino-acid chain; its full sequence is MLVLLAFIIAFHITSAALLFIATIDNAWWVGDEFFADVWRICTNNTNCTVINDSFQEYSTLQAVQATMILSTILCCIAFFIFVLQLFRLKQGERFVLTSIIQLMSCLCVMIAASIYTDRREDIHHKNAKFYPVTREGSYGYSYILAWVAFACTFISGMMYLILRKRK.

The helical transmembrane segment at 1–21 (MLVLLAFIIAFHITSAALLFI) threads the bilayer. Residues N44, N47, and N52 are each glycosylated (N-linked (GlcNAc...) asparagine). The next 3 membrane-spanning stretches (helical) occupy residues 67-87 (TMILSTILCCIAFFIFVLQLF), 95-115 (FVLTSIIQLMSCLCVMIAASI), and 143-163 (YILAWVAFACTFISGMMYLIL).

This sequence belongs to the PMP-22/EMP/MP20 family. In terms of assembly, interacts with PTK2; regulates PTK2 activation and localization. Interacts with ITGB3; regulates the levels of the heterodimer ITGA5-ITGB3 integrin surface expression. Interacts with P2RX7 (via C-terminus). Interacts with ITGB1; the interaction may be direct or indirect and ITGB1 has a heterodimer form.

Its subcellular location is the golgi apparatus membrane. The protein resides in the cell membrane. The protein localises to the apical cell membrane. It is found in the membrane raft. It localises to the cytoplasm. Its subcellular location is the nucleus. The protein resides in the perinuclear region. In terms of biological role, functions as a key regulator of cell membrane composition by regulating protein surface expression. Also, plays a role in regulation of processes including cell migration, cell proliferation, cell contraction and cell adhesion. Regulates transepithelial migration of neutrophils into the alveolar lumen, potentially via mediation of cell surface expression of adhesion markers and lipid raft formation. Negatively regulates caveolae formation by reducing CAV1 expression and CAV1 amount by increasing lysosomal degradation. Facilitates surface trafficking and the formation of lipid rafts bearing GPI-anchor proteins. Regulates surface expression of MHC1 and ICAM1 proteins increasing susceptibility to T-cell mediated cytotoxicity. Regulates the plasma membrane expression of the integrin heterodimers ITGA6-ITGB1, ITGA5-ITGB3 and ITGA5-ITGB1 resulting in modulation of cell-matrix adhesion. Also regulates many processes through PTK2. Regulates blood vessel endothelial cell migration and angiogenesis by regulating VEGF protein expression through PTK2 activation. Regulates cell migration and cell contraction through PTK2 and SRC activation. Regulates focal adhesion density, F-actin conformation and cell adhesion capacity through interaction with PTK2. Positively regulates cell proliferation. Plays a role during cell death and cell blebbing. Promotes angiogenesis and vasculogenesis through induction of VEGFA via a HIF1A-dependent pathway. Also plays a role in embryo implantation by regulating surface trafficking of integrin heterodimer ITGA5-ITGB3. Plays a role in placental angiogenesis and uterine natural killer cell regulation at the maternal-fetal placental interface, however not required in the maternal tissues for a viable pregnancy. Involved in the early stages of embryogenic development and cardiogenesis, potentially via regulation of epithelial-mesenchymal transition timing. May play a role in glomerular filtration. The protein is Epithelial membrane protein 2 (EMP2) of Pan troglodytes (Chimpanzee).